Consider the following 187-residue polypeptide: Probable cobalt-precorrin-6B C(15)-methyltransferase (decarboxylating) (187 aa).

S-adenosyl-L-methionine-binding positions include Thr15, 39-43 (GSCTG), Glu60, and Ala89.

This sequence belongs to the methyltransferase superfamily. Archaeal-type CbiT family.

The catalysed reaction is Co-precorrin-6B + S-adenosyl-L-methionine = Co-precorrin-7 + S-adenosyl-L-homocysteine + CO2. The protein operates within cofactor biosynthesis; adenosylcobalamin biosynthesis; cob(II)yrinate a,c-diamide from sirohydrochlorin (anaerobic route): step 8/10. Functionally, catalyzes the methylation of C-15 in cobalt-precorrin-6B followed by the decarboxylation of C-12 to form cobalt-precorrin-7. This is Probable cobalt-precorrin-6B C(15)-methyltransferase (decarboxylating) from Halobacterium salinarum (strain ATCC 700922 / JCM 11081 / NRC-1) (Halobacterium halobium).